The sequence spans 144 residues: Small polypeptide DEVIL 18 (144 aa).

Residues 30–58 (SFSTKTSSSSSKPVFTRSFSTKPTSYSSS) show a composition bias toward low complexity. A disordered region spans residues 30 to 89 (SFSTKTSSSSSKPVFTRSFSTKPTSYSSSEPIFRRSFSAKPTSSKSPFLSRSGSTKCPVD). The helical transmembrane segment at 42-58 (PVFTRSFSTKPTSYSSS) threads the bilayer. The span at 68–84 (AKPTSSKSPFLSRSGST) shows a compositional bias: polar residues. The interval 108 to 139 (SVTRKCRNMAKEHKSRFYIMKRCVLMLVCWHK) is required for DVL/RTFL small polypeptide activity.

This sequence belongs to the DVL/RTFL small polypeptides family.

Its subcellular location is the cell membrane. Its function is as follows. Small polypeptide acting as a regulatory molecule which coordinates cellular responses required for differentiation, growth and development, probably by restricting polar cell proliferation in lateral organs and coordinating socket cell recruitment and differentiation at trichome sites. The sequence is that of Small polypeptide DEVIL 18 from Arabidopsis thaliana (Mouse-ear cress).